The chain runs to 303 residues: AP2-like ethylene-responsive transcription factor At1g79700 (303 aa).

Residues 1 to 10 are compositionally biased toward basic residues; the sequence is MAKVSGRSKK. The tract at residues 1-55 is disordered; sequence MAKVSGRSKKTIVDDEISDKTASASESASIALTSKRKRKSPPRNAPLQRSSPYRG. Residues 20–32 are compositionally biased toward polar residues; the sequence is KTASASESASIAL. 2 consecutive DNA-binding regions (AP2/ERF) follow at residues 52–118 and 154–202; these read PYRG…LNFP and KYRG…TNFD. The interval 212–259 is disordered; sequence AADKADSDSKPIRSPSREPESSDDNKSPKSEEVIEPSTSPEVIPTRRS. Basic and acidic residues predominate over residues 214-243; it reads DKADSDSKPIRSPSREPESSDDNKSPKSEE.

Belongs to the AP2/ERF transcription factor family. AP2 subfamily.

It is found in the nucleus. Functionally, probably acts as a transcriptional activator. Binds to the GCC-box pathogenesis-related promoter element. May be involved in the regulation of gene expression by stress factors and by components of stress signal transduction pathways. The sequence is that of AP2-like ethylene-responsive transcription factor At1g79700 from Arabidopsis thaliana (Mouse-ear cress).